A 487-amino-acid polypeptide reads, in one-letter code: Probable Xaa-Pro aminopeptidase AFUB_014460 (487 aa).

Mn(2+) is bound by residues Asp-267, Asp-278, Glu-416, and Glu-455.

It belongs to the peptidase M24B family. The cofactor is Mn(2+).

The catalysed reaction is Release of any N-terminal amino acid, including proline, that is linked to proline, even from a dipeptide or tripeptide.. In terms of biological role, catalyzes the removal of a penultimate prolyl residue from the N-termini of peptides. The sequence is that of Probable Xaa-Pro aminopeptidase AFUB_014460 from Aspergillus fumigatus (strain CBS 144.89 / FGSC A1163 / CEA10) (Neosartorya fumigata).